Reading from the N-terminus, the 270-residue chain is tRNA pseudouridine synthase A (270 aa).

The active-site Nucleophile is the Asp60. Tyr118 is a substrate binding site.

Belongs to the tRNA pseudouridine synthase TruA family. As to quaternary structure, homodimer.

The enzyme catalyses uridine(38/39/40) in tRNA = pseudouridine(38/39/40) in tRNA. Its function is as follows. Formation of pseudouridine at positions 38, 39 and 40 in the anticodon stem and loop of transfer RNAs. The protein is tRNA pseudouridine synthase A of Salmonella arizonae (strain ATCC BAA-731 / CDC346-86 / RSK2980).